The sequence spans 412 residues: Serine hydroxymethyltransferase (412 aa).

Residues Leu-117 and Gly-121 to Leu-123 contribute to the (6S)-5,6,7,8-tetrahydrofolate site. Lys-226 bears the N6-(pyridoxal phosphate)lysine mark. (6S)-5,6,7,8-tetrahydrofolate-binding positions include Glu-242 and Ser-350 to Phe-352.

The protein belongs to the SHMT family. As to quaternary structure, homodimer. Pyridoxal 5'-phosphate serves as cofactor.

The protein localises to the cytoplasm. The catalysed reaction is (6R)-5,10-methylene-5,6,7,8-tetrahydrofolate + glycine + H2O = (6S)-5,6,7,8-tetrahydrofolate + L-serine. It participates in one-carbon metabolism; tetrahydrofolate interconversion. It functions in the pathway amino-acid biosynthesis; glycine biosynthesis; glycine from L-serine: step 1/1. In terms of biological role, catalyzes the reversible interconversion of serine and glycine with tetrahydrofolate (THF) serving as the one-carbon carrier. Appears to be specific for THF as the pteridine substrate, since the use of tetrahydromethanopterin (H4MPT) is much less efficient. Also exhibits THF-independent aldolase activity toward beta-hydroxyamino acids, producing glycine and aldehydes, via a retro-aldol mechanism. Thus, is able to catalyze the cleavage of L-allo-threonine and L-threo-beta-phenylserine. This chain is Serine hydroxymethyltransferase, found in Methanosarcina barkeri (strain Fusaro / DSM 804).